Here is a 347-residue protein sequence, read N- to C-terminus: Heat-inducible transcription repressor HrcA (347 aa).

The protein belongs to the HrcA family.

In terms of biological role, negative regulator of class I heat shock genes (grpE-dnaK-dnaJ and groELS operons). Prevents heat-shock induction of these operons. This chain is Heat-inducible transcription repressor HrcA, found in Sphingopyxis alaskensis (strain DSM 13593 / LMG 18877 / RB2256) (Sphingomonas alaskensis).